Consider the following 116-residue polypeptide: Ino eighty subunit 4 (116 aa).

Positions Met-1–Leu-15 are enriched in low complexity. Disordered stretches follow at residues Met-1 to Pro-40 and Glu-70 to Ser-116. Residues Lys-84–Lys-108 show a composition bias toward basic and acidic residues.

Component of the chromatin-remodeling INO80 complex, at least composed of ARP4, ARP5, ARP8, RVB1, RVB2, TAF14, NHP10, IES1, IES3, IES4, IES6, ACT1, IES2, IES5 and INO80.

The protein resides in the nucleus. This is Ino eighty subunit 4 (IES4) from Saccharomyces cerevisiae (strain ATCC 204508 / S288c) (Baker's yeast).